The primary structure comprises 159 residues: ATP synthase subunit b (159 aa).

The chain crosses the membrane as a helical span at residues Val-4–Leu-24.

It belongs to the ATPase B chain family. As to quaternary structure, F-type ATPases have 2 components, F(1) - the catalytic core - and F(0) - the membrane proton channel. F(1) has five subunits: alpha(3), beta(3), gamma(1), delta(1), epsilon(1). F(0) has three main subunits: a(1), b(2) and c(10-14). The alpha and beta chains form an alternating ring which encloses part of the gamma chain. F(1) is attached to F(0) by a central stalk formed by the gamma and epsilon chains, while a peripheral stalk is formed by the delta and b chains.

It localises to the cell inner membrane. Functionally, f(1)F(0) ATP synthase produces ATP from ADP in the presence of a proton or sodium gradient. F-type ATPases consist of two structural domains, F(1) containing the extramembraneous catalytic core and F(0) containing the membrane proton channel, linked together by a central stalk and a peripheral stalk. During catalysis, ATP synthesis in the catalytic domain of F(1) is coupled via a rotary mechanism of the central stalk subunits to proton translocation. In terms of biological role, component of the F(0) channel, it forms part of the peripheral stalk, linking F(1) to F(0). The protein is ATP synthase subunit b of Acidithiobacillus ferrooxidans (strain ATCC 23270 / DSM 14882 / CIP 104768 / NCIMB 8455) (Ferrobacillus ferrooxidans (strain ATCC 23270)).